The primary structure comprises 207 residues: Histone H1-like protein HC2 (207 aa).

Composition is skewed to basic residues over residues 1–50 and 59–72; these read MLGV…KTVA and PAAK…APVR. Residues 1–72 are disordered; that stretch reads MLGVQKKRST…KTAAKKAPVR (72 aa). Repeat copies occupy residues 35-58, 71-94, and 113-136. The interval 35–136 is 3 X 24 AA repeats of V-R-K-V-A-A-K-K-T-V-A-R-K-T-V-A-K-K-A-V-A-A-R-K; sequence VRKVAAKKTV…VAKKAVAARK (102 aa).

It belongs to the histone H1/H5 family. HCT subfamily.

Might have a role in establishing the nucleoid structure of elementary bodies. The protein is Histone H1-like protein HC2 (hctB) of Chlamydia muridarum (strain MoPn / Nigg).